We begin with the raw amino-acid sequence, 566 residues long: Sulfite reductase [NADPH] hemoprotein beta-component (566 aa).

Positions 430, 436, 475, and 479 each coordinate [4Fe-4S] cluster. Residue C479 coordinates siroheme.

Belongs to the nitrite and sulfite reductase 4Fe-4S domain family. Alpha(8)-beta(8). The alpha component is a flavoprotein, the beta component is a hemoprotein. It depends on siroheme as a cofactor. Requires [4Fe-4S] cluster as cofactor.

It carries out the reaction hydrogen sulfide + 3 NADP(+) + 3 H2O = sulfite + 3 NADPH + 4 H(+). Its pathway is sulfur metabolism; hydrogen sulfide biosynthesis; hydrogen sulfide from sulfite (NADPH route): step 1/1. Its function is as follows. Component of the sulfite reductase complex that catalyzes the 6-electron reduction of sulfite to sulfide. This is one of several activities required for the biosynthesis of L-cysteine from sulfate. The protein is Sulfite reductase [NADPH] hemoprotein beta-component of Baumannia cicadellinicola subsp. Homalodisca coagulata.